The chain runs to 82 residues: Small ribosomal subunit protein bS16 (82 aa).

Belongs to the bacterial ribosomal protein bS16 family.

The protein is Small ribosomal subunit protein bS16 of Glaesserella parasuis serovar 5 (strain SH0165) (Haemophilus parasuis).